The following is a 245-amino-acid chain: Polyhedrin (245 aa).

It belongs to the polyhedrin family.

Its function is as follows. Major component of the virus occlusion bodies, which are large proteinaceous structures (polyhedra), that protect the virus from the outside environment for extended periods until they are ingested by insect larvae. This chain is Polyhedrin, found in Lepidoptera (butterflies and moths).